The chain runs to 122 residues: Large ribosomal subunit protein uL14 (122 aa).

This sequence belongs to the universal ribosomal protein uL14 family. As to quaternary structure, part of the 50S ribosomal subunit. Forms a cluster with proteins L3 and L19. In the 70S ribosome, L14 and L19 interact and together make contacts with the 16S rRNA in bridges B5 and B8.

Functionally, binds to 23S rRNA. Forms part of two intersubunit bridges in the 70S ribosome. This is Large ribosomal subunit protein uL14 from Syntrophomonas wolfei subsp. wolfei (strain DSM 2245B / Goettingen).